Here is a 522-residue protein sequence, read N- to C-terminus: Lysine--tRNA ligase (522 aa).

Residues 44 to 52 (PSGLPHIGT) carry the 'HIGH' region motif. A 'KMSKS' region motif is present at residues 290-294 (KISKS). Lysine 293 lines the ATP pocket.

Belongs to the class-I aminoacyl-tRNA synthetase family.

The protein resides in the cytoplasm. It catalyses the reaction tRNA(Lys) + L-lysine + ATP = L-lysyl-tRNA(Lys) + AMP + diphosphate. The protein is Lysine--tRNA ligase of Rickettsia peacockii (strain Rustic).